Consider the following 294-residue polypeptide: ATP phosphoribosyltransferase (294 aa).

Belongs to the ATP phosphoribosyltransferase family. Long subfamily. Mg(2+) is required as a cofactor.

It is found in the cytoplasm. It catalyses the reaction 1-(5-phospho-beta-D-ribosyl)-ATP + diphosphate = 5-phospho-alpha-D-ribose 1-diphosphate + ATP. The protein operates within amino-acid biosynthesis; L-histidine biosynthesis; L-histidine from 5-phospho-alpha-D-ribose 1-diphosphate: step 1/9. Its activity is regulated as follows. Feedback inhibited by histidine. Functionally, catalyzes the condensation of ATP and 5-phosphoribose 1-diphosphate to form N'-(5'-phosphoribosyl)-ATP (PR-ATP). Has a crucial role in the pathway because the rate of histidine biosynthesis seems to be controlled primarily by regulation of HisG enzymatic activity. In Chlorobium chlorochromatii (strain CaD3), this protein is ATP phosphoribosyltransferase.